Here is a 364-residue protein sequence, read N- to C-terminus: Leucine-rich repeat-containing protein 19 (364 aa).

The N-terminal stretch at 1–20 (MKVTRFMFWLFSMLLPSVKS) is a signal peptide. Residues 21–264 (QASETEVPCN…SEHEPLGKSW (244 aa)) lie on the Extracellular side of the membrane. Residues N30, N35, N46, and N88 are each glycosylated (N-linked (GlcNAc...) asparagine). 6 LRR repeats span residues 44–69 (STNV…VLQM), 70–93 (YSLL…SFRN), 94–117 (LLNL…SFVG), 118–141 (LNEL…TFVP), 143–163 (NNLK…APQL), and 164–190 (PHLE…NWLN). Residues 174 to 225 (NPWNCTCGLLELHNWLNTSNVTLENENMTMCSYPDELKHDSIKSAPFTTECH) form the LRRCT domain. N177, N190, N193, N200, N241, N245, and N250 each carry an N-linked (GlcNAc...) asparagine glycan. A helical transmembrane segment spans residues 265–285 (AFLVGVVATVLLTSLLIFIAI). Over 286–364 (KCPVWYNILL…IDINEVHEEK (79 aa)) the chain is Cytoplasmic.

Interacts with TRAF2 and TRAF6. As to expression, strongly expressed in kidney, also expressed in spleen, intestine and colon. Highly expressed in epithelial cells. In kidney, mainly expressed in renal collecting duct epithelial cells.

The protein resides in the membrane. Activated by TLR ligands such as LPS, bacterial DNA and peptidoglycan. Its function is as follows. Pathogen-recognition receptor which mediates the activation of TRAF2- and TRAF6 NF-kappa-B signaling pathways and induces the expression of pro-inflammatory cytokines. In kidney, prevents infection by uropathogenic bacteria by inducing the production of cytokines, chemokines and antimicrobial substances. In gut, involved in host-microbiota interactions, plays a critical role in promoting the recruitment of immune cells and intestinal inflammation. This is Leucine-rich repeat-containing protein 19 from Mus musculus (Mouse).